The chain runs to 404 residues: Cysteine desulfurase IscS (404 aa).

Pyridoxal 5'-phosphate is bound by residues 75-76 (AT), asparagine 155, glutamine 183, and 203-205 (SSH). An N6-(pyridoxal phosphate)lysine modification is found at lysine 206. Pyridoxal 5'-phosphate is bound at residue threonine 243. The Cysteine persulfide intermediate role is filled by cysteine 328. Residue cysteine 328 participates in [2Fe-2S] cluster binding.

The protein belongs to the class-V pyridoxal-phosphate-dependent aminotransferase family. NifS/IscS subfamily. Homodimer. Forms a heterotetramer with IscU, interacts with other sulfur acceptors. Pyridoxal 5'-phosphate serves as cofactor.

It localises to the cytoplasm. The enzyme catalyses (sulfur carrier)-H + L-cysteine = (sulfur carrier)-SH + L-alanine. It participates in cofactor biosynthesis; iron-sulfur cluster biosynthesis. Functionally, master enzyme that delivers sulfur to a number of partners involved in Fe-S cluster assembly, tRNA modification or cofactor biosynthesis. Catalyzes the removal of elemental sulfur atoms from cysteine to produce alanine. Functions as a sulfur delivery protein for Fe-S cluster synthesis onto IscU, an Fe-S scaffold assembly protein, as well as other S acceptor proteins. The polypeptide is Cysteine desulfurase IscS (Histophilus somni (strain 2336) (Haemophilus somnus)).